The sequence spans 83 residues: CLAVATA3/ESR (CLE)-related protein 3 (83 aa).

Positions 1-24 (MASLKLWVCLVLLLVLELTSVHEC) are cleaved as a signal peptide. Residues 38 to 58 (RLKKIRRELFERLKEMKGRSE) are a coiled coil. Residues 53–83 (MKGRSEGEETILGNTLDSKRLSPGGPDPRHH) form a disordered region. A hydroxyproline mark is found at proline 75 and proline 78. Proline 78 is a glycosylation site (O-linked (Ara...) hydroxyproline).

It belongs to the CLV3/ESR signal peptide family. Post-translationally, the O-glycosylation (arabinosylation) of the hydroxyproline Pro-78 enhances binding affinity of the CLE3p peptide for its receptor. Mostly expressed in roots, stems and apex, and, to a lower extent, in seedlings, leaves, flowers, siliques and pollen.

The protein resides in the secreted. Its subcellular location is the extracellular space. Its function is as follows. Extracellular signal peptide that regulates cell fate. The protein is CLAVATA3/ESR (CLE)-related protein 3 of Arabidopsis thaliana (Mouse-ear cress).